Consider the following 348-residue polypeptide: Rhodopsin (348 aa).

At Met-1 the chain carries N-acetylmethionine. Residues 1–36 are Extracellular-facing; the sequence is MNGTEGPNFYVPFSNVTGVVRSPFEQPQYYLAEPWQ. N-linked (GlcNAc...) asparagine glycans are attached at residues Asn-2 and Asn-15. The helical transmembrane segment at 37–61 threads the bilayer; the sequence is FSMLAAYMFLLIVLGFPINFLTLYV. The Cytoplasmic portion of the chain corresponds to 62 to 73; sequence TVQHKKLRTPLN. A helical transmembrane segment spans residues 74–96; the sequence is YILLNLAVADLFMVFGGFTTTLY. Residues 97 to 110 are Extracellular-facing; it reads TSLHGYFVFGPTGC. Cys-110 and Cys-187 are joined by a disulfide. A helical membrane pass occupies residues 111–133; sequence NLEGFFATLGGEIALWSLVVLAI. Positions 134 to 136 match the 'Ionic lock' involved in activated form stabilization motif; sequence ERY. Over 134–152 the chain is Cytoplasmic; it reads ERYVVVCKPMSNFRFGENH. Residues 153-173 traverse the membrane as a helical segment; the sequence is AIMGVVFTWIMALACAAPPLV. The Extracellular segment spans residues 174-202; that stretch reads GWSRYIPEGMQCSCGIDYYTLKPEVNNES. Residue Glu-201 coordinates Zn(2+). The helical transmembrane segment at 203–224 threads the bilayer; sequence FVIYMFVVHFTIPMIVIFFCYG. Residues 225 to 252 are Cytoplasmic-facing; that stretch reads QLVFTVKEAAAQQQESATTQKAEKEVTR. A helical membrane pass occupies residues 253 to 274; sequence MVIIMVIFFLICWLPYASVAFY. At 275–286 the chain is on the extracellular side; it reads IFTHQGSNFGPI. Gln-279 lines the Zn(2+) pocket. A helical transmembrane segment spans residues 287-308; it reads FMTLPAFFAKSSSIYNPVIYIM. Residue Lys-296 is modified to N6-(retinylidene)lysine. Residues 309–348 are Cytoplasmic-facing; it reads LNKQFRNCMLTTLCCGKNPLGDDDASATASKTETSQVAPA. Residues Cys-322 and Cys-323 are each lipidated (S-palmitoyl cysteine). The tract at residues 330 to 348 is interaction with SAG; it reads DDDASATASKTETSQVAPA. Ser-334 is subject to Phosphoserine. Thr-336 is modified (phosphothreonine). Position 338 is a phosphoserine (Ser-338). Thr-340 and Thr-342 each carry phosphothreonine. Ser-343 carries the post-translational modification Phosphoserine.

Belongs to the G-protein coupled receptor 1 family. Opsin subfamily. As to quaternary structure, homodimer. May form a complex composed of RHO, GRK1 and RCVRN in a Ca(2+)-dependent manner; RCVRN prevents the interaction between GRK1 and RHO. Interacts with GRK1. Interacts (phosphorylated form) with SAG. Interacts with GNAT1. Interacts with GNAT3. SAG and G-proteins compete for a common binding site. Interacts with PRCD; the interaction promotes PRCD stability. Forms a complex with ASAP1 and ARF4. Forms a complex with ASAP1, RAB11A, Rabin8/RAB3IP, ARF4 and RAB11FIP3; the complex regulates Golgi-to-cilia rhodopsin/RHO transport in photoreceptors. Phosphorylated on some or all of the serine and threonine residues present in the C-terminal region. Post-translationally, contains one covalently linked retinal chromophore. Upon light absorption, the covalently bound 11-cis-retinal is converted to all-trans-retinal. After hydrolysis of the Schiff base and release of the covalently bound all-trans-retinal, active rhodopsin is regenerated by binding of a fresh molecule of 11-cis-retinal. Rod-shaped photoreceptor cells in the retina (at protein level).

Its subcellular location is the membrane. It is found in the cell projection. The protein localises to the cilium. The protein resides in the photoreceptor outer segment. Functionally, photoreceptor required for image-forming vision at low light intensity. Required for photoreceptor cell viability after birth. Light-induced isomerization of 11-cis to all-trans retinal triggers a conformational change that activates signaling via G-proteins. Subsequent receptor phosphorylation mediates displacement of the bound G-protein alpha subunit by the arrestin SAG and terminates signaling. The polypeptide is Rhodopsin (Rho) (Mus musculus (Mouse)).